The chain runs to 115 residues: NADH-ubiquinone oxidoreductase chain 3 (115 aa).

The next 3 membrane-spanning stretches (helical) occupy residues 3 to 23, 55 to 75, and 84 to 104; these read FMLT…IAFW, FFLV…LLPL, and LEVM…SLAY.

Belongs to the complex I subunit 3 family. Core subunit of respiratory chain NADH dehydrogenase (Complex I) which is composed of 45 different subunits. Interacts with TMEM186. Interacts with TMEM242.

It localises to the mitochondrion inner membrane. The enzyme catalyses a ubiquinone + NADH + 5 H(+)(in) = a ubiquinol + NAD(+) + 4 H(+)(out). In terms of biological role, core subunit of the mitochondrial membrane respiratory chain NADH dehydrogenase (Complex I) which catalyzes electron transfer from NADH through the respiratory chain, using ubiquinone as an electron acceptor. Essential for the catalytic activity of complex I. The chain is NADH-ubiquinone oxidoreductase chain 3 from Rhinolophus pumilus (Horseshoe bat).